A 380-amino-acid polypeptide reads, in one-letter code: Palmitoyltransferase ZDHHC20 (380 aa).

The Cytoplasmic segment spans residues 1-14; the sequence is MAPWTLWRCCQRVV. A helical transmembrane segment spans residues 15-35; it reads GWVPVLFITFVVVWSYYAYVV. Over 36-53 the chain is Lumenal; that stretch reads ELCVSTISRTGEKGKTVV. A helical membrane pass occupies residues 54–74; that stretch reads YLVAFHLFFVMFVWSYWMTIF. Topologically, residues 75–169 are cytoplasmic; it reads TSPASPSKEF…NNCVGFTNYK (95 aa). The DHHC domain maps to 126-176; the sequence is RYCEKCQLIKPDRAHHCSACDRCVLKMDHHCPWVNNCVGFTNYKFFMLFLL. The Zn(2+) site is built by cysteine 128 and cysteine 131. Residues lysine 135 and 140 to 143 each bind substrate; that span reads HHCS. Positions 141, 142, 145, 148, and 155 each coordinate Zn(2+). Cysteine 156 serves as the catalytic S-palmitoyl cysteine intermediate. Cysteine 162 serves as a coordination point for Zn(2+). A helical transmembrane segment spans residues 170–190; the sequence is FFMLFLLYSLLYCLFVAATVL. Topologically, residues 191–222 are lumenal; sequence EYFIKFWTLCRRKSTENCPKNEPTVLNFPSAK. Residues 223–246 traverse the membrane as a helical segment; that stretch reads FHVLFLFFVSAMFFVSVLSLFSYH. Topologically, residues 247–380 are cytoplasmic; the sequence is CWLVGKNRTT…NNHVTVEIEN (134 aa). A phosphoserine mark is found at serine 320, serine 345, and serine 354.

This sequence belongs to the DHHC palmitoyltransferase family. In terms of processing, autopalmitoylated (in vitro). Highest levels in lung.

The protein resides in the golgi apparatus membrane. Its subcellular location is the cell membrane. The protein localises to the cytoplasm. It is found in the perinuclear region. It localises to the endoplasmic reticulum membrane. The protein resides in the endoplasmic reticulum-Golgi intermediate compartment membrane. It carries out the reaction L-cysteinyl-[protein] + hexadecanoyl-CoA = S-hexadecanoyl-L-cysteinyl-[protein] + CoA. The catalysed reaction is L-cysteinyl-[protein] + tetradecanoyl-CoA = S-tetradecanoyl-L-cysteinyl-[protein] + CoA. The enzyme catalyses L-cysteinyl-[protein] + octadecanoyl-CoA = S-octadecanoyl-L-cysteinyl-[protein] + CoA. Palmitoyltransferase that could catalyze the addition of palmitate onto various protein substrates. Catalyzes palmitoylation of Cys residues in the cytoplasmic C-terminus of EGFR, and modulates the duration of EGFR signaling by modulating palmitoylation-dependent EGFR internalization and degradation. Has a preference for acyl-CoA with C16 fatty acid chains. Can also utilize acyl-CoA with C14 and C18 fatty acid chains. May palmitoylate CALHM1 subunit of gustatory voltage-gated ion channels and modulate channel gating and kinetics. The protein is Palmitoyltransferase ZDHHC20 of Mus musculus (Mouse).